We begin with the raw amino-acid sequence, 254 residues long: Hydrolase tropI (254 aa).

Active-site residues include Cys-141, Asp-187, and His-219.

It belongs to the dienelactone hydrolase family.

The protein operates within secondary metabolite biosynthesis. Its function is as follows. Hydrolase; part of the gene cluster that mediates the biosynthesis of the tropolone class of fungal maleic anhydrides. The pathway begins with the synthesis of 3-methylorcinaldehyde by the non-reducing polyketide synthase (PKS) tropA. 3-methylorcinaldehyde is the substrate for the FAD-dependent monooxygenase tropB to yield a dearomatized hydroxycyclohexadione. The 2-oxoglutarate-dependent dioxygenase tropC then performs the oxidative ring expansion to provide the first tropolone metabolite stipitaldehyde. Trop D converts stipitaldehyde into stipitacetal which is in turn converted to stipitalide by the short-chain dehydrogenase/reductase tropE. The next steps involve tropF, tropG, tropH, tropI and tropJ to form successive tropolone maleic anhydrides including stipitaldehydic, stipitatonic and stipitatic acids. This chain is Hydrolase tropI, found in Talaromyces stipitatus (strain ATCC 10500 / CBS 375.48 / QM 6759 / NRRL 1006) (Penicillium stipitatum).